The primary structure comprises 259 residues: 7-cyano-7-deazaguanine synthase (259 aa).

An ATP-binding site is contributed by 32–42 (LSGGLDSVTCL). The Zn(2+) site is built by C223, C233, C236, and C239.

This sequence belongs to the QueC family. It depends on Zn(2+) as a cofactor.

It catalyses the reaction 7-carboxy-7-deazaguanine + NH4(+) + ATP = 7-cyano-7-deazaguanine + ADP + phosphate + H2O + H(+). The protein operates within purine metabolism; 7-cyano-7-deazaguanine biosynthesis. Functionally, catalyzes the ATP-dependent conversion of 7-carboxy-7-deazaguanine (CDG) to 7-cyano-7-deazaguanine (preQ(0)). This chain is 7-cyano-7-deazaguanine synthase, found in Psychrobacter cryohalolentis (strain ATCC BAA-1226 / DSM 17306 / VKM B-2378 / K5).